Here is a 414-residue protein sequence, read N- to C-terminus: Acyltransferase MYCGRDRAFT_85486 (414 aa).

Polar residues predominate over residues 16–25; it reads DGTSTVTIRP. Positions 16–47 are disordered; it reads DGTSTVTIRPTQKAAPSEEPSQDTAPSKKDSN. His329 is a substrate binding site. Catalysis depends on Glu367, which acts as the Proton acceptor.

It belongs to the lysine N-acyltransferase mbtK family.

The protein operates within siderophore biosynthesis. Functionally, acyltransferase; part of the gene cluster 14 that mediates the biosynthesis of a ferrichrome A-like siderophore which may contribute to organismal virulence. The first step of siderophore biosynthesis is performed by the HMG-CoA synthase (HMGS) MYCGRDRAFT_54740 which catalyzes the generation of HMG-CoA and CoA using acetoacetyl-CoA and acetyl-CoA as substrates. The enoyl-CoA isomerase/hydratase MYCGRDRAFT_76805 then catalyzes the conversion of HMG-CoA to methylglutaconyl-CoA. The acyltransferase MYCGRDRAFT_85486 then fuses methylglutaconyl-CoA with hydroxyornithine to yield methylglutaconyl hydroxyornithine. Methylglutaconyl hydroxyornithine is then available for use by the nonribosomal peptide synthetase NRPS2 to generate the ferrichrome A-like siderophore. This chain is Acyltransferase MYCGRDRAFT_85486, found in Zymoseptoria tritici (strain CBS 115943 / IPO323) (Speckled leaf blotch fungus).